The primary structure comprises 393 residues: Flavohemoprotein (393 aa).

Residues 1-139 (MLSNAQRALI…LADLLIEAEE (139 aa)) enclose the Globin domain. His-85 is a heme b binding site. Active-site charge relay system residues include Tyr-95 and Glu-138. The tract at residues 150–393 (GGWRGVRRFR…FFGPAAALDA (244 aa)) is reductase. In terms of domain architecture, FAD-binding FR-type spans 153–256 (RGVRRFRVAR…FPPAGDFVLR (104 aa)). Residues Tyr-191 and 205 to 208 (RNYS) each bind FAD. Residue 268-273 (GVGITP) participates in NADP(+) binding. An FAD-binding site is contributed by 384–387 (FFGP).

It belongs to the globin family. Two-domain flavohemoproteins subfamily. This sequence in the C-terminal section; belongs to the flavoprotein pyridine nucleotide cytochrome reductase family. The cofactor is heme b. It depends on FAD as a cofactor.

The catalysed reaction is 2 nitric oxide + NADPH + 2 O2 = 2 nitrate + NADP(+) + H(+). It catalyses the reaction 2 nitric oxide + NADH + 2 O2 = 2 nitrate + NAD(+) + H(+). In terms of biological role, is involved in NO detoxification in an aerobic process, termed nitric oxide dioxygenase (NOD) reaction that utilizes O(2) and NAD(P)H to convert NO to nitrate, which protects the bacterium from various noxious nitrogen compounds. Therefore, plays a central role in the inducible response to nitrosative stress. In Pseudomonas aeruginosa (strain ATCC 15692 / DSM 22644 / CIP 104116 / JCM 14847 / LMG 12228 / 1C / PRS 101 / PAO1), this protein is Flavohemoprotein.